Consider the following 297-residue polypeptide: Probable endonuclease 4 (297 aa).

Zn(2+)-binding residues include His-69, His-110, Glu-145, Asp-179, His-182, His-214, Asp-227, His-229, and Glu-259.

The protein belongs to the AP endonuclease 2 family. Zn(2+) is required as a cofactor.

It carries out the reaction Endonucleolytic cleavage to 5'-phosphooligonucleotide end-products.. Its function is as follows. Endonuclease IV plays a role in DNA repair. It cleaves phosphodiester bonds at apurinic or apyrimidinic (AP) sites, generating a 3'-hydroxyl group and a 5'-terminal sugar phosphate. The chain is Probable endonuclease 4 from Listeria monocytogenes serotype 4b (strain F2365).